Reading from the N-terminus, the 294-residue chain is Protease HtpX (294 aa).

The next 2 helical transmembrane spans lie at 4–24 (ILLFILTNLSVMIIFGIILFI) and 33–53 (FGLIIMSGVFGFGGSIISLLL). Zn(2+) is bound at residue His139. Residue Glu140 is part of the active site. Residue His143 participates in Zn(2+) binding. 2 helical membrane passes run 147-167 (GDMITMTLIQGVVNTFVIFLS) and 197-217 (FFISMALEVVFGILASIITFW). Position 223 (Glu223) interacts with Zn(2+).

It belongs to the peptidase M48B family. Zn(2+) is required as a cofactor.

Its subcellular location is the cell membrane. This is Protease HtpX from Wigglesworthia glossinidia brevipalpis.